A 253-amino-acid chain; its full sequence is Adapter protein MecA (253 aa).

It belongs to the MecA family. As to quaternary structure, homodimer.

Functionally, enables the recognition and targeting of unfolded and aggregated proteins to the ClpC protease or to other proteins involved in proteolysis. This is Adapter protein MecA from Streptococcus pyogenes serotype M18 (strain MGAS8232).